Consider the following 307-residue polypeptide: Malate dehydrogenase (307 aa).

Residues 8–13 (GAGNVG) and Asp32 contribute to the NAD(+) site. Substrate is bound by residues Arg81 and Arg87. Residues Asn94 and 117-119 (VSN) each bind NAD(+). Substrate contacts are provided by Asn119 and Arg150. His174 (proton acceptor) is an active-site residue.

It belongs to the LDH/MDH superfamily. MDH type 3 family.

The enzyme catalyses (S)-malate + NAD(+) = oxaloacetate + NADH + H(+). Catalyzes the reversible oxidation of malate to oxaloacetate. The chain is Malate dehydrogenase from Dehalococcoides mccartyi (strain ATCC BAA-2100 / JCM 16839 / KCTC 5957 / BAV1).